The following is a 428-amino-acid chain: Histidine--tRNA ligase (428 aa).

The protein belongs to the class-II aminoacyl-tRNA synthetase family. Homodimer.

The protein resides in the cytoplasm. The catalysed reaction is tRNA(His) + L-histidine + ATP = L-histidyl-tRNA(His) + AMP + diphosphate + H(+). In Halalkalibacterium halodurans (strain ATCC BAA-125 / DSM 18197 / FERM 7344 / JCM 9153 / C-125) (Bacillus halodurans), this protein is Histidine--tRNA ligase.